A 498-amino-acid polypeptide reads, in one-letter code: Glutamate--tRNA ligase (498 aa).

The 'HIGH' region motif lies at 10–20 (PSPTGYFHIGG). Positions 252-256 (KLSKR) match the 'KMSKS' region motif. Lys-255 contacts ATP.

This sequence belongs to the class-I aminoacyl-tRNA synthetase family. Glutamate--tRNA ligase type 1 subfamily. As to quaternary structure, monomer.

The protein localises to the cytoplasm. It carries out the reaction tRNA(Glu) + L-glutamate + ATP = L-glutamyl-tRNA(Glu) + AMP + diphosphate. In terms of biological role, catalyzes the attachment of glutamate to tRNA(Glu) in a two-step reaction: glutamate is first activated by ATP to form Glu-AMP and then transferred to the acceptor end of tRNA(Glu). The chain is Glutamate--tRNA ligase from Mycoplasmoides gallisepticum (strain R(low / passage 15 / clone 2)) (Mycoplasma gallisepticum).